We begin with the raw amino-acid sequence, 215 residues long: MPSLLILIFTIEVAVELINTIGAATINNLLWRIFNALPTKLSAQFAEQRKLQQDYLKVRRELNATSSQDEFAKWAKLRRQHDKLLEQLEKKKAALDSTKGNFDKYITGIRWVGTQGLRYFLPFWYAKVPMFWLPYGWFPYYAEWLVSFPRAPMGSVSIASWQLACTGFVVLIKDAITALVVFVMGMRQSNVKQAVPVKAVSGEKASDEKEGKKEL.

The Lumenal portion of the chain corresponds to 1–4 (MPSL). Residues 5-24 (LILIFTIEVAVELINTIGAA) form a helical membrane-spanning segment. At 25–110 (TINNLLWRIF…NFDKYITGIR (86 aa)) the chain is on the cytoplasmic side. A coiled-coil region spans residues 72 to 104 (AKWAKLRRQHDKLLEQLEKKKAALDSTKGNFDK). Residues 111–131 (WVGTQGLRYFLPFWYAKVPMF) form a helical membrane-spanning segment. The Lumenal segment spans residues 132–155 (WLPYGWFPYYAEWLVSFPRAPMGS). A helical transmembrane segment spans residues 156–172 (VSIASWQLACTGFVVLI). Topologically, residues 173-215 (KDAITALVVFVMGMRQSNVKQAVPVKAVSGEKASDEKEGKKEL) are cytoplasmic.

The protein belongs to the WRB/GET1 family. As to quaternary structure, interacts with GET3.

It is found in the endoplasmic reticulum membrane. Functionally, required for the post-translational delivery of tail-anchored (TA) proteins to the endoplasmic reticulum. Acts as a membrane receptor for soluble GET3, which recognizes and selectively binds the transmembrane domain of TA proteins in the cytosol. This is Protein GET1 from Pyricularia oryzae (strain 70-15 / ATCC MYA-4617 / FGSC 8958) (Rice blast fungus).